The sequence spans 427 residues: 3-phosphoshikimate 1-carboxyvinyltransferase (427 aa).

Residues K22, S23, and R27 each coordinate 3-phosphoshikimate. K22 contributes to the phosphoenolpyruvate binding site. Phosphoenolpyruvate contacts are provided by G96 and R124. S169, S170, Q171, S197, D313, N336, and K340 together coordinate 3-phosphoshikimate. Residue Q171 coordinates phosphoenolpyruvate. D313 functions as the Proton acceptor in the catalytic mechanism. Residues R344, R386, and K411 each contribute to the phosphoenolpyruvate site.

It belongs to the EPSP synthase family. As to quaternary structure, monomer.

The protein resides in the cytoplasm. It catalyses the reaction 3-phosphoshikimate + phosphoenolpyruvate = 5-O-(1-carboxyvinyl)-3-phosphoshikimate + phosphate. Its pathway is metabolic intermediate biosynthesis; chorismate biosynthesis; chorismate from D-erythrose 4-phosphate and phosphoenolpyruvate: step 6/7. Functionally, catalyzes the transfer of the enolpyruvyl moiety of phosphoenolpyruvate (PEP) to the 5-hydroxyl of shikimate-3-phosphate (S3P) to produce enolpyruvyl shikimate-3-phosphate and inorganic phosphate. In Citrobacter koseri (strain ATCC BAA-895 / CDC 4225-83 / SGSC4696), this protein is 3-phosphoshikimate 1-carboxyvinyltransferase.